The following is a 156-amino-acid chain: Ribonuclease pancreatic (156 aa).

Residues 1 to 28 form the signal peptide; that stretch reads MALEKSLVLLPLLVLALLVLGWIQPSLG. Residues Lys-35 and Arg-38 each contribute to the substrate site. The active-site Proton acceptor is the His-40. 4 disulfides stabilise this stretch: Cys-54-Cys-112, Cys-68-Cys-123, Cys-86-Cys-138, and Cys-93-Cys-100. The N-linked (GlcNAc...) asparagine glycan is linked to Asn-62. 69–73 serves as a coordination point for substrate; sequence KPVNT. Asn-90 carries N-linked (GlcNAc...) asparagine glycosylation. Lys-94 provides a ligand contact to substrate. A glycan (N-linked (GlcNAc...) asparagine) is linked at Asn-104. A substrate-binding site is contributed by Arg-113. Residue His-147 is the Proton donor of the active site.

It belongs to the pancreatic ribonuclease family. In terms of assembly, monomer. Interacts with and forms tight 1:1 complexes with RNH1. Dimerization of two such complexes may occur. Interaction with RNH1 inhibits this protein.

It localises to the secreted. It catalyses the reaction an [RNA] containing cytidine + H2O = an [RNA]-3'-cytidine-3'-phosphate + a 5'-hydroxy-ribonucleotide-3'-[RNA].. The enzyme catalyses an [RNA] containing uridine + H2O = an [RNA]-3'-uridine-3'-phosphate + a 5'-hydroxy-ribonucleotide-3'-[RNA].. Endonuclease that catalyzes the cleavage of RNA on the 3' side of pyrimidine nucleotides. Acts on single-stranded and double-stranded RNA. The polypeptide is Ribonuclease pancreatic (RNASE1) (Lemur catta (Ring-tailed lemur)).